We begin with the raw amino-acid sequence, 540 residues long: Chaperonin GroEL (540 aa).

ATP contacts are provided by residues 29–32 (TIGP), 86–90 (DGTTT), G413, 477–479 (NAA), and D493.

It belongs to the chaperonin (HSP60) family. As to quaternary structure, forms a cylinder of 14 subunits composed of two heptameric rings stacked back-to-back. Interacts with the co-chaperonin GroES.

It is found in the cytoplasm. The enzyme catalyses ATP + H2O + a folded polypeptide = ADP + phosphate + an unfolded polypeptide.. Functionally, together with its co-chaperonin GroES, plays an essential role in assisting protein folding. The GroEL-GroES system forms a nano-cage that allows encapsulation of the non-native substrate proteins and provides a physical environment optimized to promote and accelerate protein folding. This chain is Chaperonin GroEL, found in Lactobacillus helveticus (strain DPC 4571).